The chain runs to 130 residues: Small ribosomal subunit protein uS9 (130 aa).

The interval Pro-108–Arg-130 is disordered. The segment covering Lys-111–Arg-130 has biased composition (basic residues).

Belongs to the universal ribosomal protein uS9 family.

This Desulforamulus reducens (strain ATCC BAA-1160 / DSM 100696 / MI-1) (Desulfotomaculum reducens) protein is Small ribosomal subunit protein uS9.